Consider the following 232-residue polypeptide: 7-cyano-7-deazaguanine synthase (232 aa).

7–17 is a binding site for ATP; the sequence is CSGGLDSVSLA. Cysteine 185, cysteine 193, cysteine 196, and cysteine 199 together coordinate Zn(2+).

Belongs to the QueC family. Requires Zn(2+) as cofactor.

It catalyses the reaction 7-carboxy-7-deazaguanine + NH4(+) + ATP = 7-cyano-7-deazaguanine + ADP + phosphate + H2O + H(+). Its pathway is purine metabolism; 7-cyano-7-deazaguanine biosynthesis. Its function is as follows. Catalyzes the ATP-dependent conversion of 7-carboxy-7-deazaguanine (CDG) to 7-cyano-7-deazaguanine (preQ(0)). The protein is 7-cyano-7-deazaguanine synthase of Brucella canis (strain ATCC 23365 / NCTC 10854 / RM-666).